Consider the following 124-residue polypeptide: Large ribosomal subunit protein bL12 (124 aa).

Belongs to the bacterial ribosomal protein bL12 family. In terms of assembly, homodimer. Part of the ribosomal stalk of the 50S ribosomal subunit. Forms a multimeric L10(L12)X complex, where L10 forms an elongated spine to which 2 to 4 L12 dimers bind in a sequential fashion. Binds GTP-bound translation factors.

Forms part of the ribosomal stalk which helps the ribosome interact with GTP-bound translation factors. Is thus essential for accurate translation. The polypeptide is Large ribosomal subunit protein bL12 (Sulfurovum sp. (strain NBC37-1)).